A 339-amino-acid polypeptide reads, in one-letter code: HPr kinase/phosphorylase (339 aa).

Catalysis depends on residues H153 and K174. 168–175 (GKSGLGKS) serves as a coordination point for ATP. A Mg(2+)-binding site is contributed by S175. D192 (proton acceptor; for phosphorylation activity. Proton donor; for dephosphorylation activity) is an active-site residue. Residues 216-225 (MEIRGLGVVD) form an important for the catalytic mechanism of both phosphorylation and dephosphorylation region. E217 contributes to the Mg(2+) binding site. The active site involves R258. The segment at 279–284 (PINPGK) is important for the catalytic mechanism of dephosphorylation.

Belongs to the HPrK/P family. Homohexamer. The cofactor is Mg(2+).

The catalysed reaction is [HPr protein]-L-serine + ATP = [HPr protein]-O-phospho-L-serine + ADP + H(+). It carries out the reaction [HPr protein]-O-phospho-L-serine + phosphate + H(+) = [HPr protein]-L-serine + diphosphate. Its function is as follows. Catalyzes the ATP- as well as the pyrophosphate-dependent phosphorylation of a specific serine residue in HPr, a phosphocarrier protein of the phosphoenolpyruvate-dependent sugar phosphotransferase system (PTS). HprK/P also catalyzes the pyrophosphate-producing, inorganic phosphate-dependent dephosphorylation (phosphorolysis) of seryl-phosphorylated HPr (P-Ser-HPr). The protein is HPr kinase/phosphorylase of Chlorobium phaeobacteroides (strain BS1).